The following is a 234-amino-acid chain: Fibroblast growth factor-binding protein 1 (234 aa).

The first 23 residues, 1-23 (MRTHGLTLLSLLLLAVPMLLVEA), serve as a signal peptide directing secretion. Positions 25 to 59 (KEGRNRRGSKASADESLALGKPGKEPRSQPTNYPI) are disordered. Intrachain disulfides connect Cys-71–Cys-88, Cys-97–Cys-130, and Cys-106–Cys-142. N-linked (GlcNAc...) asparagine glycosylation is present at Asn-155. A disordered region spans residues 169 to 200 (MEPSPMDTVEVTTSSSPEKTQTMATKDPQCEE). The O-linked (GalNAc...) serine glycan is linked to Ser-172. A compositionally biased stretch (polar residues) spans 178–192 (EVTTSSSPEKTQTMA). A sufficient for interaction with FGF2 and FGF2-induced effects region spans residues 194-234 (KDPQCEEEDLKNQRKAALEYCGETWGSLCNFFLSMVQGSSC). Intrachain disulfides connect Cys-198–Cys-234 and Cys-214–Cys-222.

It belongs to the fibroblast growth factor-binding protein family. In terms of assembly, found in a complex with FGFBP1, FGF1 and FGF2. Interacts with FGF1, FGF7, FGF10, FGF22 and HSPG2. Interacts with FGF2.

It is found in the secreted. It localises to the extracellular space. The protein localises to the cell membrane. In terms of biological role, acts as a carrier protein that release fibroblast-binding factors (FGFs) from the extracellular matrix (EM) storage and thus enhance the mitogenic activity of FGFs. Enhances FGF2 signaling during tissue repair, angiogenesis and in tumor growth. This is Fibroblast growth factor-binding protein 1 (FGFBP1) from Bos taurus (Bovine).